A 204-amino-acid chain; its full sequence is MSTYLQSSEGKFIPATKRPDGTWRKARRVKDGYVPQEEVPLYESKGKQFVAQRQAGVPPGMCPLVAAESKKEREKQERTRAKKQEKESGRQPKAPAPGVLVMPPSTCPPPKVSQQQQQQPSGSRDINSISKAMEDTLKLDAPQEVVDPAKQLKKLRKKIREIEQIESRIQAGEQKKLDKDQLDKVKKKSEILRQIKDLESTPRS.

Disordered stretches follow at residues 1–27 (MSTYLQSSEGKFIPATKRPDGTWRKAR) and 52–142 (QRQA…LDAP). Residues 68-90 (ESKKEREKQERTRAKKQEKESGR) show a composition bias toward basic and acidic residues. The segment covering 120–130 (PSGSRDINSIS) has biased composition (polar residues). Residues 149 to 181 (AKQLKKLRKKIREIEQIESRIQAGEQKKLDKDQ) are a coiled coil.

It belongs to the pym family. Interacts (via N-terminus) with mago and tsu/Y14; the interaction is direct.

It is found in the cytoplasm. The protein resides in the nucleus. In terms of biological role, regulator of the exon junction complex (EJC), a multiprotein complex that associates immediately upstream of the exon-exon junction on mRNAs and serves as a positional landmarks for the intron exon structure of genes and directs post-transcriptional processes in the cytoplasm such as mRNA export, nonsense-mediated mRNA decay (NMD) or translation. The protein is Partner of Y14 and mago of Drosophila simulans (Fruit fly).